Reading from the N-terminus, the 416-residue chain is Actin-like protein 9 (416 aa).

The disordered stretch occupies residues 1–23 (MDPNQGNPLEPQDSPEIPKPSLN).

This sequence belongs to the actin family. In terms of assembly, interacts with ACTL7A.

Its subcellular location is the cytoplasmic vesicle. The protein resides in the secretory vesicle. The protein localises to the acrosome. It localises to the cytoplasm. It is found in the cytoskeleton. Its subcellular location is the perinuclear theca. In terms of biological role, testis-specic protein that plays an important role in fusion of proacrosomal vesicles and perinuclear theca formation. This Bos taurus (Bovine) protein is Actin-like protein 9 (ACTL9).